A 61-amino-acid polypeptide reads, in one-letter code: Metallothionein-II, hippocampal (61 aa).

An N-acetylmethionine modification is found at Met1. The interval 1-29 is beta; that stretch reads MDPNCSCATGGSCTCANSCTCKACKCASC. Residues Cys5, Cys7, Cys13, Cys15, Cys19, Cys21, Cys24, Cys26, Cys29, Cys33, Cys34, Cys36, Cys37, Cys41, Cys44, Cys48, Cys50, Cys57, Cys59, and Cys60 each coordinate a divalent metal cation. Residues 30–61 form an alpha region; it reads KKSCCSCCPVGCAKCAQGCICKGASDKCSCCA.

The protein belongs to the metallothionein superfamily. Type 1 family.

Metallothioneins have a high content of cysteine residues that bind various heavy metals; these proteins are transcriptionally regulated by both heavy metals and glucocorticoids. This isoform may play a role in regulating the transport, accumulation, and compartmentation of zinc in the hippocampus. In Bos taurus (Bovine), this protein is Metallothionein-II, hippocampal.